The following is a 506-amino-acid chain: Aminoaldehyde dehydrogenase 1b (506 aa).

Residue Asp-102 coordinates Na(+). Residues 162 to 164 and 188 to 191 contribute to the NAD(+) site; these read TPW and KPSE. Leu-192 is a Na(+) binding site. Residues 242–245 and Glu-263 each bind NAD(+); that span reads SFET. Glu-263 serves as the catalytic Proton acceptor. Cys-297 serves as the catalytic Nucleophile. Residues Glu-396 and Trp-462 each coordinate NAD(+).

Belongs to the aldehyde dehydrogenase family.

The catalysed reaction is 4-aminobutanal + NAD(+) + H2O = 4-aminobutanoate + NADH + 2 H(+). It carries out the reaction 3-aminopropanal + NAD(+) + H2O = beta-alanine + NADH + 2 H(+). It catalyses the reaction 4-(trimethylamino)butanal + NAD(+) + H2O = 4-(trimethylamino)butanoate + NADH + 2 H(+). The enzyme catalyses 4-guanidinobutanal + NAD(+) + H2O = 4-guanidinobutanoate + NADH + 2 H(+). The catalysed reaction is betaine aldehyde + NAD(+) + H2O = glycine betaine + NADH + 2 H(+). Its pathway is amine and polyamine biosynthesis; betaine biosynthesis via choline pathway; betaine from betaine aldehyde: step 1/1. In terms of biological role, dehydrogenase that catalyzes the oxidation of several aminoaldehydes. Metabolizes and detoxifies aldehyde products of polyamine degradation to non-toxic amino acids. Catalyzes the oxidation of 4-aminobutanal and 3-aminopropanal to 4-aminobutanoate and beta-alanine, respectively. Catalyzes the oxidation of 4-(trimethylamino)butanal and 4-guanidinobutanal to 4-trimethylammoniobutanoate and 4-guanidinobutanoate, respectively. Catalyzes the oxidation of betaine aldehyde to glycine betaine. The chain is Aminoaldehyde dehydrogenase 1b from Zea mays (Maize).